The following is a 143-amino-acid chain: Large-conductance mechanosensitive channel (143 aa).

A run of 2 helical transmembrane segments spans residues 10 to 30 and 89 to 109; these read FAVK…GAFS and GSFI…FLMV.

The protein belongs to the MscL family. Homopentamer.

The protein resides in the cell inner membrane. Its function is as follows. Channel that opens in response to stretch forces in the membrane lipid bilayer. May participate in the regulation of osmotic pressure changes within the cell. This is Large-conductance mechanosensitive channel from Burkholderia vietnamiensis (strain G4 / LMG 22486) (Burkholderia cepacia (strain R1808)).